A 436-amino-acid chain; its full sequence is Methionine aminopeptidase 2 (436 aa).

The tract at residues 1–61 (MSEIQPKTEV…KKKKAAPVAS (61 aa)) is disordered. The segment covering 16 to 26 (EEEEESDDEED) has biased composition (acidic residues). Over residues 44 to 56 (KKKKKKNKKKKKA) the composition is skewed to basic residues. H191 is a binding site for substrate. D211, D222, and H291 together coordinate a divalent metal cation. Residue H299 coordinates substrate. Residues E324 and E417 each contribute to the a divalent metal cation site.

This sequence belongs to the peptidase M24A family. Methionine aminopeptidase eukaryotic type 2 subfamily. Co(2+) is required as a cofactor. Zn(2+) serves as cofactor. It depends on Mn(2+) as a cofactor. Requires Fe(2+) as cofactor.

The protein resides in the cytoplasm. It carries out the reaction Release of N-terminal amino acids, preferentially methionine, from peptides and arylamides.. Functionally, cotranslationally removes the N-terminal methionine from nascent proteins. The N-terminal methionine is often cleaved when the second residue in the primary sequence is small and uncharged (Met-Ala-, Cys, Gly, Pro, Ser, Thr, or Val). In Dictyostelium discoideum (Social amoeba), this protein is Methionine aminopeptidase 2 (metap2).